Consider the following 511-residue polypeptide: Maturase K (511 aa).

The protein belongs to the intron maturase 2 family. MatK subfamily.

Its subcellular location is the plastid. It localises to the chloroplast. In terms of biological role, usually encoded in the trnK tRNA gene intron. Probably assists in splicing its own and other chloroplast group II introns. The protein is Maturase K of Paulownia tomentosa (Princess tree).